Consider the following 483-residue polypeptide: Aspartyl/glutamyl-tRNA(Asn/Gln) amidotransferase subunit B (483 aa).

It belongs to the GatB/GatE family. GatB subfamily. In terms of assembly, heterotrimer of A, B and C subunits.

The catalysed reaction is L-glutamyl-tRNA(Gln) + L-glutamine + ATP + H2O = L-glutaminyl-tRNA(Gln) + L-glutamate + ADP + phosphate + H(+). The enzyme catalyses L-aspartyl-tRNA(Asn) + L-glutamine + ATP + H2O = L-asparaginyl-tRNA(Asn) + L-glutamate + ADP + phosphate + 2 H(+). In terms of biological role, allows the formation of correctly charged Asn-tRNA(Asn) or Gln-tRNA(Gln) through the transamidation of misacylated Asp-tRNA(Asn) or Glu-tRNA(Gln) in organisms which lack either or both of asparaginyl-tRNA or glutaminyl-tRNA synthetases. The reaction takes place in the presence of glutamine and ATP through an activated phospho-Asp-tRNA(Asn) or phospho-Glu-tRNA(Gln). In Thermomicrobium roseum (strain ATCC 27502 / DSM 5159 / P-2), this protein is Aspartyl/glutamyl-tRNA(Asn/Gln) amidotransferase subunit B.